The sequence spans 467 residues: Argininosuccinate lyase (467 aa).

This sequence belongs to the lyase 1 family. Argininosuccinate lyase subfamily.

Its subcellular location is the cytoplasm. It carries out the reaction 2-(N(omega)-L-arginino)succinate = fumarate + L-arginine. It functions in the pathway amino-acid biosynthesis; L-arginine biosynthesis; L-arginine from L-ornithine and carbamoyl phosphate: step 3/3. This is Argininosuccinate lyase from Thioalkalivibrio sulfidiphilus (strain HL-EbGR7).